A 182-amino-acid polypeptide reads, in one-letter code: MQTQSLPTDSLPASSALRSVAVDKQDFRDAMARLGSAVNIITTDGPAGRAGFTASAVCSVTDTPPTLLVCLNRSASVYSVFQQNQTLCVNTLCAEHESLSNLFGGKTPMEMRFSAARWSTLVTGCPVLSGAVASFDCHITQVISVGTHDILFCQAAAVIHNDDQHGLAYFDRCYHPLMRQSR.

This sequence belongs to the non-flavoprotein flavin reductase family. RutF subfamily.

The enzyme catalyses FMNH2 + NAD(+) = FMN + NADH + 2 H(+). In terms of biological role, catalyzes the reduction of FMN to FMNH2 which is used to reduce pyrimidine by RutA via the Rut pathway. The sequence is that of FMN reductase (NADH) RutF from Yersinia enterocolitica serotype O:8 / biotype 1B (strain NCTC 13174 / 8081).